The primary structure comprises 83 residues: Small ribosomal subunit protein uS17 (83 aa).

The protein belongs to the universal ribosomal protein uS17 family. In terms of assembly, part of the 30S ribosomal subunit.

In terms of biological role, one of the primary rRNA binding proteins, it binds specifically to the 5'-end of 16S ribosomal RNA. In Nitratiruptor sp. (strain SB155-2), this protein is Small ribosomal subunit protein uS17.